Reading from the N-terminus, the 249-residue chain is Triosephosphate isomerase (249 aa).

Substrate contacts are provided by N12 and K14. N6-acetyllysine is present on K14. Deamidated asparagine is present on N16. Residue Y68 is modified to 3'-nitrotyrosine. N72 bears the Deamidated asparagine mark. At S80 the chain carries Phosphoserine. Catalysis depends on H96, which acts as the Electrophile. Position 106 is a phosphoserine (S106). A Glycyl lysine isopeptide (Lys-Gly) (interchain with G-Cter in SUMO1) cross-link involves residue K142. K149 carries the N6-succinyllysine modification. K156 is modified (N6-acetyllysine; alternate). K156 is subject to N6-succinyllysine; alternate. Position 159 is a phosphoserine (S159). E166 (proton acceptor) is an active-site residue. T173 carries the post-translational modification Phosphothreonine. At K194 the chain carries N6-acetyllysine; alternate. K194 carries the N6-succinyllysine; alternate modification. At K194 the chain carries N6-methyllysine; alternate. S198 carries the post-translational modification Phosphoserine. Y209 is subject to 3'-nitrotyrosine. S212 carries the post-translational modification Phosphoserine. T214 is modified (phosphothreonine). S223 carries the post-translational modification Phosphoserine. Position 238 is an N6-acetyllysine (K238).

Belongs to the triosephosphate isomerase family. Homodimer. Post-translationally, asn-16 and Asn-72 undergo deamidation which gives rise to four extra negative charges. These are expected to decrease subunit-subunit interactions and so expose the hydrophobic interface to the aqueous environment.

Its subcellular location is the cytoplasm. The enzyme catalyses D-glyceraldehyde 3-phosphate = dihydroxyacetone phosphate. It catalyses the reaction dihydroxyacetone phosphate = methylglyoxal + phosphate. Its pathway is carbohydrate degradation; glycolysis; D-glyceraldehyde 3-phosphate from glycerone phosphate: step 1/1. It functions in the pathway carbohydrate biosynthesis; gluconeogenesis. Triosephosphate isomerase is an extremely efficient metabolic enzyme that catalyzes the interconversion between dihydroxyacetone phosphate (DHAP) and D-glyceraldehyde-3-phosphate (G3P) in glycolysis and gluconeogenesis. Its function is as follows. It is also responsible for the non-negligible production of methylglyoxal a reactive cytotoxic side-product that modifies and can alter proteins, DNA and lipids. This is Triosephosphate isomerase (TPI1) from Oryctolagus cuniculus (Rabbit).